We begin with the raw amino-acid sequence, 62 residues long: UPF0337 protein XAC0100 (62 aa).

Belongs to the UPF0337 (CsbD) family.

The sequence is that of UPF0337 protein XAC0100 from Xanthomonas axonopodis pv. citri (strain 306).